Here is a 151-residue protein sequence, read N- to C-terminus: Transcriptional repressor NrdR (151 aa).

Residues 3–34 fold into a zinc finger; it reads CPFCGYSESKVVDSRSTEDNMAIRRRRECLEC. The 91-residue stretch at 49 to 139 folds into the ATP-cone domain; sequence ILVIKKDSSR…VYRQFKDINT (91 aa).

The protein belongs to the NrdR family. It depends on Zn(2+) as a cofactor.

Functionally, negatively regulates transcription of bacterial ribonucleotide reductase nrd genes and operons by binding to NrdR-boxes. In Clostridium acetobutylicum (strain ATCC 824 / DSM 792 / JCM 1419 / IAM 19013 / LMG 5710 / NBRC 13948 / NRRL B-527 / VKM B-1787 / 2291 / W), this protein is Transcriptional repressor NrdR.